The chain runs to 61 residues: MKGTPSFGKINKSHTHIRCRRCGRNAYNVSKHYCAACGFGKTKKIRRYSWQNKKVNGVRIR.

Positions 19, 22, 34, and 37 each coordinate Zn(2+). A C4-type zinc finger spans residues 19 to 37 (CRRCGRNAYNVSKHYCAAC).

The protein belongs to the eukaryotic ribosomal protein eL37 family. It depends on Zn(2+) as a cofactor.

Its function is as follows. Binds to the 23S rRNA. The polypeptide is Large ribosomal subunit protein eL37 (Saccharolobus islandicus (strain Y.N.15.51 / Yellowstone #2) (Sulfolobus islandicus)).